A 155-amino-acid chain; its full sequence is Small ribosomal subunit protein uS7 (155 aa).

Belongs to the universal ribosomal protein uS7 family. As to quaternary structure, part of the 30S ribosomal subunit. Contacts proteins S9 and S11.

Functionally, one of the primary rRNA binding proteins, it binds directly to 16S rRNA where it nucleates assembly of the head domain of the 30S subunit. Is located at the subunit interface close to the decoding center, probably blocks exit of the E-site tRNA. In Pseudothermotoga lettingae (strain ATCC BAA-301 / DSM 14385 / NBRC 107922 / TMO) (Thermotoga lettingae), this protein is Small ribosomal subunit protein uS7.